The chain runs to 932 residues: Protein translocase subunit SecA (932 aa).

ATP is bound by residues glutamine 86, glycine 104–threonine 108, and aspartate 494. The segment at glutamate 857–arginine 932 is disordered. A compositionally biased stretch (polar residues) spans threonine 905–proline 915. A compositionally biased stretch (basic residues) spans lysine 920–arginine 932.

Belongs to the SecA family. In terms of assembly, monomer and homodimer. Part of the essential Sec protein translocation apparatus which comprises SecA, SecYEG and auxiliary proteins SecDF. Other proteins may also be involved.

The protein localises to the cell membrane. The protein resides in the cytoplasm. It catalyses the reaction ATP + H2O + cellular proteinSide 1 = ADP + phosphate + cellular proteinSide 2.. Functionally, part of the Sec protein translocase complex. Interacts with the SecYEG preprotein conducting channel. Has a central role in coupling the hydrolysis of ATP to the transfer of proteins into and across the cell membrane, serving as an ATP-driven molecular motor driving the stepwise translocation of polypeptide chains across the membrane. The chain is Protein translocase subunit SecA from Renibacterium salmoninarum (strain ATCC 33209 / DSM 20767 / JCM 11484 / NBRC 15589 / NCIMB 2235).